A 131-amino-acid polypeptide reads, in one-letter code: Large-conductance mechanosensitive channel (131 aa).

A run of 2 helical transmembrane segments spans residues 14-34 (VMDM…VTSL) and 71-91 (GNFI…FLLV).

It belongs to the MscL family. As to quaternary structure, homopentamer.

Its subcellular location is the cell inner membrane. Its function is as follows. Channel that opens in response to stretch forces in the membrane lipid bilayer. May participate in the regulation of osmotic pressure changes within the cell. This Dinoroseobacter shibae (strain DSM 16493 / NCIMB 14021 / DFL 12) protein is Large-conductance mechanosensitive channel.